A 101-amino-acid chain; its full sequence is Small ribosomal subunit protein uS14A (101 aa).

Positions 31-59 (IRSPASSPEQRVAAQSELNRQPRDASAVR) are disordered.

Belongs to the universal ribosomal protein uS14 family. Part of the 30S ribosomal subunit. Contacts proteins S3 and S10.

Binds 16S rRNA, required for the assembly of 30S particles and may also be responsible for determining the conformation of the 16S rRNA at the A site. This chain is Small ribosomal subunit protein uS14A, found in Mycobacteroides abscessus (strain ATCC 19977 / DSM 44196 / CCUG 20993 / CIP 104536 / JCM 13569 / NCTC 13031 / TMC 1543 / L948) (Mycobacterium abscessus).